The following is a 417-amino-acid chain: DnaJ protein homolog ANJ1 (417 aa).

In terms of domain architecture, J spans 11–76; that stretch reads STRYYEILGV…REIYDQYGED (66 aa). The segment at 135-219 adopts a CR-type zinc-finger fold; it reads GTTKKLSLSR…CKGEKVVQEK (85 aa). 3 CXXCXGXG motif repeats span residues 148-155, 164-171, and 191-198; these read CSKCTGKG, CSGCQGTG, and CNECKGTG. One copy of the CXXCXGXG motif; approximate repeat lies at 207–214; the sequence is CPQCKGEK. A disordered region spans residues 384–417; it reads IEEEMKRKQTQAQQEAYDEDDEPAGGQRVQCAQQ. Position 414 is a cysteine methyl ester (cysteine 414). The S-farnesyl cysteine moiety is linked to residue cysteine 414. The propeptide at 415-417 is removed in mature form; the sequence is AQQ.

Its subcellular location is the membrane. Plays a continuous role in plant development probably in the structural organization of compartments. The protein is DnaJ protein homolog ANJ1 of Atriplex nummularia (Old man saltbush).